Here is a 475-residue protein sequence, read N- to C-terminus: Bifunctional protein HldE (475 aa).

The segment at 1–320 is ribokinase; that stretch reads MNSSYLNFKD…AIMFQRSHNT (320 aa). 196 to 199 is an ATP binding site; that stretch reads NLLE. The active site involves Asp-265. The interval 346-475 is cytidylyltransferase; the sequence is FTNGCFDILH…TTSIIEKANL (130 aa).

The protein in the N-terminal section; belongs to the carbohydrate kinase PfkB family. In the C-terminal section; belongs to the cytidylyltransferase family. In terms of assembly, homodimer.

It carries out the reaction D-glycero-beta-D-manno-heptose 7-phosphate + ATP = D-glycero-beta-D-manno-heptose 1,7-bisphosphate + ADP + H(+). The enzyme catalyses D-glycero-beta-D-manno-heptose 1-phosphate + ATP + H(+) = ADP-D-glycero-beta-D-manno-heptose + diphosphate. It participates in nucleotide-sugar biosynthesis; ADP-L-glycero-beta-D-manno-heptose biosynthesis; ADP-L-glycero-beta-D-manno-heptose from D-glycero-beta-D-manno-heptose 7-phosphate: step 1/4. It functions in the pathway nucleotide-sugar biosynthesis; ADP-L-glycero-beta-D-manno-heptose biosynthesis; ADP-L-glycero-beta-D-manno-heptose from D-glycero-beta-D-manno-heptose 7-phosphate: step 3/4. In terms of biological role, catalyzes the phosphorylation of D-glycero-D-manno-heptose 7-phosphate at the C-1 position to selectively form D-glycero-beta-D-manno-heptose-1,7-bisphosphate. Catalyzes the ADP transfer from ATP to D-glycero-beta-D-manno-heptose 1-phosphate, yielding ADP-D-glycero-beta-D-manno-heptose. The protein is Bifunctional protein HldE of Marinomonas sp. (strain MWYL1).